Reading from the N-terminus, the 140-residue chain is Putative pre-16S rRNA nuclease (140 aa).

The protein belongs to the YqgF nuclease family.

It localises to the cytoplasm. Could be a nuclease involved in processing of the 5'-end of pre-16S rRNA. This is Putative pre-16S rRNA nuclease from Moorella thermoacetica (strain ATCC 39073 / JCM 9320).